The sequence spans 331 residues: Putative mitochondrial 2-oxoglutarate/malate carrier protein (331 aa).

Solcar repeat units follow at residues 39 to 128 (VRAA…FMSR), 140 to 231 (VGFK…AKAQ), and 239 to 329 (SSKV…LGWL). The next 6 membrane-spanning stretches (helical) occupy residues 42 to 62 (ALPF…IQPI), 103 to 121 (GLSA…RIGC), 148 to 168 (AGLA…LALI), 199 to 219 (GVAA…ALNF), 245 to 265 (LSAS…FDFV), and 309 to 329 (YVRI…LGWL).

The protein belongs to the mitochondrial carrier (TC 2.A.29) family.

It is found in the mitochondrion inner membrane. Its function is as follows. Catalyzes the transport of 2-oxoglutarate across the inner mitochondrial membrane. In Neurospora crassa (strain ATCC 24698 / 74-OR23-1A / CBS 708.71 / DSM 1257 / FGSC 987), this protein is Putative mitochondrial 2-oxoglutarate/malate carrier protein (mic-33).